The sequence spans 257 residues: Probable pectate lyase E (257 aa).

The N-terminal stretch at 1-17 (MYQKLLLVPLLLTSALA) is a signal peptide.

The protein belongs to the polysaccharide lyase 3 family. Ca(2+) is required as a cofactor.

The protein resides in the secreted. It carries out the reaction Eliminative cleavage of (1-&gt;4)-alpha-D-galacturonan to give oligosaccharides with 4-deoxy-alpha-D-galact-4-enuronosyl groups at their non-reducing ends.. Functionally, pectinolytic enzyme consist of four classes of enzymes: pectin lyase, polygalacturonase, pectin methylesterase and rhamnogalacturonase. Among pectinolytic enzymes, pectin lyase is the most important in depolymerization of pectin, since it cleaves internal glycosidic bonds of highly methylated pectins. Favors pectate, the anion, over pectin, the methyl ester. This Aspergillus flavus (strain ATCC 200026 / FGSC A1120 / IAM 13836 / NRRL 3357 / JCM 12722 / SRRC 167) protein is Probable pectate lyase E (plyE).